Consider the following 276-residue polypeptide: C-type lectin domain family 12 member B (276 aa).

The Cytoplasmic portion of the chain corresponds to 1-43; the sequence is MSEDMTYATLTFQDSVAAGNNQDRNNLRKRGYPAPSSIWRQAA. Positions 5 to 10 match the ITIM motif motif; sequence MTYATL. Position 7 is a phosphotyrosine (Y7). The chain crosses the membrane as a helical; Signal-anchor for type II membrane protein span at residues 44–64; that stretch reads LGLLTLCVMLLIGLVTLGIMF. Over 65–276 the chain is Extracellular; that stretch reads LQMSSEINSD…AALVKIEDLD (212 aa). 3 N-linked (GlcNAc...) asparagine glycosylation sites follow: N91, N176, and N237. A C-type lectin domain is found at 150-264; sequence YQTSCYYFAV…CSAEISWICE (115 aa). Cystine bridges form between C172–C263 and C242–C255.

Homodimer. Interacts (via ITIM motif) with PTPN6. Interacts (via ITIM motif) with PTPN11; this interaction triggers dephosphorylation and activation of PTPN11.

It localises to the cell membrane. Inhibitory receptor postulated to negatively regulate immune and non-immune functions. Upon phosphorylation, recruits SH2 domain-containing PTPN6 and PTPN11 phosphatases to its ITIM motif and antagonizes activation signals. Although it inhibits KLRK1/NKG2D-mediated signaling, it does not bind known ligands of KLRK1/NKG2D and therefore is not its inhibitory counterpart. May limit activation of myeloid cell subsets in response to infection or tissue inflammation. May protect target cells against natural killer cell-mediated lysis. May negatively regulate cell cycle and differentiation of melanocytes via inactivation of STAT3. This Bos taurus (Bovine) protein is C-type lectin domain family 12 member B (CLEC12B).